The sequence spans 263 residues: Shikimate dehydrogenase (NADP(+)) (263 aa).

Shikimate contacts are provided by residues 16-18 (SKS) and Thr65. The active-site Proton acceptor is Lys69. Shikimate contacts are provided by Asn90 and Asp105. NADP(+) is bound by residues 125–129 (GSGGS) and Leu208. Tyr210 lines the shikimate pocket. Gly230 is a binding site for NADP(+).

Belongs to the shikimate dehydrogenase family. In terms of assembly, homodimer.

The catalysed reaction is shikimate + NADP(+) = 3-dehydroshikimate + NADPH + H(+). It participates in metabolic intermediate biosynthesis; chorismate biosynthesis; chorismate from D-erythrose 4-phosphate and phosphoenolpyruvate: step 4/7. Inhibited by curcumin, 3-(2-naphthyloxy)-4-oxo-2-(trifluoromethyl)-4H-chromen-7-yl 3-chlorobenzoate, butyl 2-{[3-(2-naphthyloxy)-4-oxo-2-(trifluoromethyl)-4H-chromen-7-yl]oxy}propanoate, 2-({2-[(2-{[2-(2,3-dimethylanilino)-2-oxoethyl]sulfanyl}-1,3-benzothiazol-6-yl)amino]-2-oxoethyl}sulfanyl)-N-(2-naphthyl)acetamide, and maesaquinone diacetate. In terms of biological role, involved in the biosynthesis of the chorismate, which leads to the biosynthesis of aromatic amino acids. Catalyzes the reversible NADPH linked reduction of 3-dehydroshikimate (DHSA) to yield shikimate (SA). It can also use NAD to oxidize shikimate. The sequence is that of Shikimate dehydrogenase (NADP(+)) from Helicobacter pylori (Campylobacter pylori).